A 342-amino-acid chain; its full sequence is Protein RecA (342 aa).

It belongs to the RecA family.

The protein localises to the cytoplasm. Functionally, can catalyze the hydrolysis of ATP in the presence of single-stranded DNA, the ATP-dependent uptake of single-stranded DNA by duplex DNA, and the ATP-dependent hybridization of homologous single-stranded DNAs. It interacts with LexA causing its activation and leading to its autocatalytic cleavage. This is Protein RecA from Pectobacterium carotovorum (Erwinia carotovora).